A 368-amino-acid chain; its full sequence is 4-hydroxy-3-methylbut-2-en-1-yl diphosphate synthase (flavodoxin) (368 aa).

Cysteine 268, cysteine 271, cysteine 303, and glutamate 310 together coordinate [4Fe-4S] cluster.

The protein belongs to the IspG family. [4Fe-4S] cluster is required as a cofactor.

The catalysed reaction is (2E)-4-hydroxy-3-methylbut-2-enyl diphosphate + oxidized [flavodoxin] + H2O + 2 H(+) = 2-C-methyl-D-erythritol 2,4-cyclic diphosphate + reduced [flavodoxin]. Its pathway is isoprenoid biosynthesis; isopentenyl diphosphate biosynthesis via DXP pathway; isopentenyl diphosphate from 1-deoxy-D-xylulose 5-phosphate: step 5/6. Converts 2C-methyl-D-erythritol 2,4-cyclodiphosphate (ME-2,4cPP) into 1-hydroxy-2-methyl-2-(E)-butenyl 4-diphosphate. This chain is 4-hydroxy-3-methylbut-2-en-1-yl diphosphate synthase (flavodoxin), found in Listeria monocytogenes serovar 1/2a (strain ATCC BAA-679 / EGD-e).